The primary structure comprises 208 residues: Small ribosomal subunit protein uS4 (208 aa).

One can recognise an S4 RNA-binding domain in the interval 97–158 (TRLDNVIYRM…RAQKYLCVQE (62 aa)).

Belongs to the universal ribosomal protein uS4 family. Part of the 30S ribosomal subunit. Contacts protein S5. The interaction surface between S4 and S5 is involved in control of translational fidelity.

In terms of biological role, one of the primary rRNA binding proteins, it binds directly to 16S rRNA where it nucleates assembly of the body of the 30S subunit. With S5 and S12 plays an important role in translational accuracy. In Xylella fastidiosa (strain 9a5c), this protein is Small ribosomal subunit protein uS4.